We begin with the raw amino-acid sequence, 452 residues long: Probable multidrug resistance protein NorM (452 aa).

Transmembrane regions (helical) follow at residues 12-34 (RQFL…ITVL), 49-71 (GVAI…LTAV), 91-113 (VIQS…YFLI), 128-150 (VIAK…YNVM), 162-184 (VTML…FIFG), 194-216 (AGAG…YIVH), 245-267 (GIPI…LLMS), 282-304 (NFAS…VVGF), 317-339 (YSYL…ILLF), 359-381 (DFLL…QGAL), 388-410 (NYTL…FVIG), and 415-437 (FGAF…GLFF).

This sequence belongs to the multi antimicrobial extrusion (MATE) (TC 2.A.66.1) family.

Its subcellular location is the cell membrane. Its function is as follows. Multidrug efflux pump. The polypeptide is Probable multidrug resistance protein NorM (norM) (Bacillus licheniformis (strain ATCC 14580 / DSM 13 / JCM 2505 / CCUG 7422 / NBRC 12200 / NCIMB 9375 / NCTC 10341 / NRRL NRS-1264 / Gibson 46)).